The primary structure comprises 286 residues: L-cysteine S-thiosulfotransferase subunit SoxA (286 aa).

The N-terminal stretch at 1–26 (MTVSKRFLAPVFAMVGGLVLAFSANA) is a signal peptide. The Cytochrome c domain occupies 80 to 166 (LAVERGADIW…ALTSYIKHQS (87 aa)). 7 residues coordinate heme: C100, C103, H104, C138, C202, C205, and H206. Substrate is bound at residue R243. C247 is a heme binding site. Catalysis depends on C247, which acts as the Cysteine persulfide intermediate.

It belongs to the SoxA family. As to quaternary structure, heterodimer of SoxA and SoxX. Requires heme as cofactor. Cysteine persulfide at Cys-247.

It localises to the periplasm. It catalyses the reaction L-cysteinyl-[SoxY protein] + thiosulfate + 2 Fe(III)-[cytochrome c] = S-sulfosulfanyl-L-cysteinyl-[SoxY protein] + 2 Fe(II)-[cytochrome c] + 2 H(+). The catalysed reaction is S-sulfanyl-L-cysteinyl-[SoxY protein] + thiosulfate + 2 Fe(III)-[cytochrome c] = S-(2-sulfodisulfanyl)-L-cysteinyl-[SoxY protein] + 2 Fe(II)-[cytochrome c] + 2 H(+). In terms of biological role, C-type diheme cytochrome, which is part of the SoxAX cytochrome complex involved in sulfur oxidation. The SoxAX complex catalyzes the formation of a heterodisulfide bond between the conserved cysteine residue on a sulfur carrier SoxYZ complex subunit SoxY and thiosulfate or other inorganic sulfur substrates. This leads to the liberation of two electrons, which may be transferred from the SoxAX complex to another cytochrome c that then channels them into the respiratory electron transport chain. Some electrons may be used for reductive CO(2) fixation. This Pseudaminobacter salicylatoxidans protein is L-cysteine S-thiosulfotransferase subunit SoxA.